Reading from the N-terminus, the 397-residue chain is 2-isopropylmalate synthase 1 (397 aa).

In terms of domain architecture, Pyruvate carboxyltransferase spans 6 to 268 (VIVFDTTLRD…VHGINTKEIY (263 aa)). Residues Asp-15, His-203, His-205, and Asn-239 each contribute to the Mn(2+) site.

The protein belongs to the alpha-IPM synthase/homocitrate synthase family. LeuA type 1 subfamily. As to quaternary structure, homodimer. Requires Mn(2+) as cofactor.

It is found in the cytoplasm. The catalysed reaction is 3-methyl-2-oxobutanoate + acetyl-CoA + H2O = (2S)-2-isopropylmalate + CoA + H(+). It participates in amino-acid biosynthesis; L-leucine biosynthesis; L-leucine from 3-methyl-2-oxobutanoate: step 1/4. Catalyzes the condensation of the acetyl group of acetyl-CoA with 3-methyl-2-oxobutanoate (2-ketoisovalerate) to form 3-carboxy-3-hydroxy-4-methylpentanoate (2-isopropylmalate). The chain is 2-isopropylmalate synthase 1 from Caldanaerobacter subterraneus subsp. tengcongensis (strain DSM 15242 / JCM 11007 / NBRC 100824 / MB4) (Thermoanaerobacter tengcongensis).